A 461-amino-acid chain; its full sequence is Argininosuccinate lyase (461 aa).

Belongs to the lyase 1 family. Argininosuccinate lyase subfamily.

Its subcellular location is the cytoplasm. It carries out the reaction 2-(N(omega)-L-arginino)succinate = fumarate + L-arginine. The protein operates within amino-acid biosynthesis; L-arginine biosynthesis; L-arginine from L-ornithine and carbamoyl phosphate: step 3/3. This is Argininosuccinate lyase from Streptococcus gordonii (strain Challis / ATCC 35105 / BCRC 15272 / CH1 / DL1 / V288).